We begin with the raw amino-acid sequence, 194 residues long: MRYPESLLKLTRALSRLPGIGPKTAQRLALHLAFHKEEAEALAEALEGLKRVRACRECGNLAEGELCPICQDEDRDRSLLAVVESVADLYALERSGEFRGLYHVLGGALNPLEGIGPKELNLEGLFRRLEGVEEVVLATSMTVEGEATALYLAEELKKRGVRVTRPAYGLPVGGSLEYADEVTLGRALEGRRPV.

A C4-type zinc finger spans residues 55-70 (CRECGNLAEGELCPIC). In terms of domain architecture, Toprim spans 78-171 (SLLAVVESVA…RVTRPAYGLP (94 aa)).

The protein belongs to the RecR family.

Its function is as follows. May play a role in DNA repair. It seems to be involved in an RecBC-independent recombinational process of DNA repair. It may act with RecF and RecO. This Thermus thermophilus (strain ATCC BAA-163 / DSM 7039 / HB27) protein is Recombination protein RecR.